The following is a 458-amino-acid chain: ATP synthase subunit beta (458 aa).

148-155 is an ATP binding site; the sequence is GGAGVGKT.

The protein belongs to the ATPase alpha/beta chains family. In terms of assembly, F-type ATPases have 2 components, CF(1) - the catalytic core - and CF(0) - the membrane proton channel. CF(1) has five subunits: alpha(3), beta(3), gamma(1), delta(1), epsilon(1). CF(0) has three main subunits: a(1), b(2) and c(9-12). The alpha and beta chains form an alternating ring which encloses part of the gamma chain. CF(1) is attached to CF(0) by a central stalk formed by the gamma and epsilon chains, while a peripheral stalk is formed by the delta and b chains.

It localises to the cell inner membrane. The enzyme catalyses ATP + H2O + 4 H(+)(in) = ADP + phosphate + 5 H(+)(out). Produces ATP from ADP in the presence of a proton gradient across the membrane. The catalytic sites are hosted primarily by the beta subunits. The chain is ATP synthase subunit beta from Shewanella halifaxensis (strain HAW-EB4).